A 433-amino-acid polypeptide reads, in one-letter code: MVRLLASEVQQLLHNKFVVVLGDSVHRAVYKDLVLLLQKDCLLTNKQLRTKGELSFEKDQLKMGGELDTLHNRTDYREVREFCSDHHLVRFYFLTRVYSEYMESVLEELQSGNHAPDVIIMNSCLWDVSRYGRNSLSSYKQNLENLFGRMDQVLPKSCLLVWNTAMPLGDKIKAAFLPQKCKGQYPRISVATLKRKVTQANLYSHAEATKHYFDVLDLNFHFRQARKHLQGDGVHWNEHAHRKLSYLLLAHMADAWGVELPQRDSWEPDFEAWESSGQVEERQPQDNLGPQVFAPSPHCPFRPPPLLPSPGLPIRPPPLLGCPLPQPQQMPPFPLYPQVSYFSSDPVFQSDEFYIHSDSPPPTHTGYAFEGDFSFYPQPPVPNFRPPCHQRQAPVVHRGFPRHFARGPYSNPWRDRPRRPPKHSPAGLESRPQ.

The disordered stretch occupies residues 386–433; it reads PPCHQRQAPVVHRGFPRHFARGPYSNPWRDRPRRPPKHSPAGLESRPQ.

The protein belongs to the PC-esterase family.

In Mus musculus (Mouse), this protein is PC-esterase domain-containing protein 1B (Pced1b).